Here is a 160-residue protein sequence, read N- to C-terminus: MPSFDIQSELNKHEVSNAVDQANREVATRFDFKGSGATYKYEGNSITLQAETDFQLKQMIDILQNKFAKRQIDVAHMRLEDPIIQHKSAQQTVMLLEGIDQTAAKKIIKLIKDQKLKVQAAIQGEKVRVTGKKRDDLQSVIGLLKEQEIGLPLQFDNFRD.

The protein belongs to the YajQ family.

In terms of biological role, nucleotide-binding protein. In Coxiella burnetii (strain CbuK_Q154) (Coxiella burnetii (strain Q154)), this protein is Nucleotide-binding protein CbuK_1936.